Consider the following 619-residue polypeptide: Lateral signaling target protein 2 homolog (619 aa).

The FYVE-type zinc finger occupies 501-561 (DSDCEQCTAC…VCNLCFLYKI (61 aa)). Zn(2+)-binding residues include C507, C510, C523, C526, C531, C534, C553, and C556. The tract at residues 598 to 619 (HERSQDGSQSNESPTATTATTI) is disordered. A compositionally biased stretch (polar residues) spans 603–619 (DGSQSNESPTATTATTI).

It belongs to the lst-2 family.

Functionally, negative regulator of epidermal growth factor receptor (EGFR) signaling. In Brugia malayi (Filarial nematode worm), this protein is Lateral signaling target protein 2 homolog.